Reading from the N-terminus, the 489-residue chain is Protein translocase subunit SecY (489 aa).

Residues 1–20 (MGWKDAAEPVLSRMPAVARP) lie on the Cytoplasmic side of the membrane. A helical membrane pass occupies residues 21–47 (EGHVPFRRKLGWTGGILVLYFFLTNVT). Topologically, residues 48–59 (LFGLDAATANDL) are extracellular. An intramembrane region (helical) is located at residues 60–67 (FGQFRSIL). The chain crosses the membrane as a discontinuously helical span at residues 60-88 (FGQFRSILAGQQGSVLQLGIGPIVTASIV). The stretch at 68–79 (AGQQGSVLQLGI) is an intramembrane region. The helical intramembrane region spans 80–88 (GPIVTASIV). Residues 89 to 110 (LQLLGGADLLGLDTDNNPRDQV) lie on the Cytoplasmic side of the membrane. A helical transmembrane segment spans residues 111–135 (LYQGLQKLLVGVMICLTGLPMVFAG). The Extracellular portion of the chain corresponds to 136–153 (NFLPADQAVATSLGIGTV). Residues 154–178 (GVKGLIFAQIAVGGVLILFMDEIVS) traverse the membrane as a helical segment. Over 179-184 (KWGVGS) the chain is Cytoplasmic. Residues 185–203 (GVGLFIIAGVSQQLVGGLF) traverse the membrane as a helical segment. The Extracellular segment spans residues 204–244 (SWQGLGGTSGFFATWIGIITGAIELPASPTDLLSTVFLGQG). A helical transmembrane segment spans residues 245-266 (QLLALITTLLIFGIVVYAESVR). Residues 267–291 (VEIPLSHARVKGARGRFPVKLIYAS) are Cytoplasmic-facing. A helical transmembrane segment spans residues 292–313 (VLPMILVRALQANIQFLGRFLN). The Extracellular portion of the chain corresponds to 314 to 364 (SSWVGMPAWLGQYTSGQVTGGLLYYLAPIQSRSDWMWFLGLTSADPLDIAI). Residues 365–384 (RVLIDLIFMIVGGAVFAIFW) traverse the membrane as a helical segment. At 385-427 (VETTGMGPKSTAQQIQNSGMQIPGFRRNPQVIERVMERYIPQV) the chain is on the cytoplasmic side. A helical transmembrane segment spans residues 428-446 (TVIGGALVGLLAVMANMLG). Residues 447 to 450 (TIGA) lie on the Extracellular side of the membrane. A helical transmembrane segment spans residues 451 to 465 (VSGTGLLLTVSITYK). Topologically, residues 466-488 (LYEEIAEEQLMEMHPMMRNMFGS) are cytoplasmic.

This sequence belongs to the SecY/SEC61-alpha family. Component of the Sec protein translocase complex. Heterotrimer consisting of alpha (SecY), beta (SecG) and gamma (SecE) subunits. The heterotrimers can form oligomers, although 1 heterotrimer is thought to be able to translocate proteins. Interacts with the ribosome. May interact with SecDF, and other proteins may be involved.

The protein localises to the cell membrane. In terms of biological role, the central subunit of the protein translocation channel SecYEG. Consists of two halves formed by TMs 1-5 and 6-10. These two domains form a lateral gate at the front which open onto the bilayer between TMs 2 and 7, and are clamped together by SecE at the back. The channel is closed by both a pore ring composed of hydrophobic SecY resides and a short helix (helix 2A) on the extracellular side of the membrane which forms a plug. The plug probably moves laterally to allow the channel to open. The ring and the pore may move independently. This is Protein translocase subunit SecY from Haloferax volcanii (strain ATCC 29605 / DSM 3757 / JCM 8879 / NBRC 14742 / NCIMB 2012 / VKM B-1768 / DS2) (Halobacterium volcanii).